The sequence spans 860 residues: Pentatricopeptide repeat-containing protein At2g40720 (860 aa).

PPR repeat units lie at residues Ser-59–Tyr-93, Asp-94–Ser-124, Asp-132–Pro-166, Asp-167–Thr-203, Asp-204–Lys-234, Asn-236–Leu-270, Val-271–Asn-305, Asp-306–Ile-340, Trp-341–Pro-371, Asp-372–Ser-406, Thr-407–Lys-437, Asp-438–Leu-472, Asp-475–Leu-509, Asn-510–Glu-540, Asn-541–Pro-575, Asp-576–Ser-610, Asp-611–Lys-641, Ser-642–Pro-676, Asp-677–Asp-707, and Asn-713–Glu-743. Residues Ile-748–Ser-823 form a type E motif region. The interval Asp-824–Val-854 is type E(+) motif.

Belongs to the PPR family. PCMP-E subfamily.

The sequence is that of Pentatricopeptide repeat-containing protein At2g40720 (PCMP-E26) from Arabidopsis thaliana (Mouse-ear cress).